Reading from the N-terminus, the 884-residue chain is Valine--tRNA ligase (884 aa).

Positions 43–53 (PNVTGSLHIGH) match the 'HIGH' region motif. A 'KMSKS' region motif is present at residues 530–534 (KMSKS). Position 533 (Lys533) interacts with ATP. Residues 817-884 (VIDLDAERGR…KLKAALERLM (68 aa)) are a coiled coil.

The protein belongs to the class-I aminoacyl-tRNA synthetase family. ValS type 1 subfamily. In terms of assembly, monomer.

It is found in the cytoplasm. It catalyses the reaction tRNA(Val) + L-valine + ATP = L-valyl-tRNA(Val) + AMP + diphosphate. Functionally, catalyzes the attachment of valine to tRNA(Val). As ValRS can inadvertently accommodate and process structurally similar amino acids such as threonine, to avoid such errors, it has a 'posttransfer' editing activity that hydrolyzes mischarged Thr-tRNA(Val) in a tRNA-dependent manner. The sequence is that of Valine--tRNA ligase from Zymomonas mobilis subsp. mobilis (strain ATCC 31821 / ZM4 / CP4).